Here is a 156-residue protein sequence, read N- to C-terminus: Ribosomal RNA large subunit methyltransferase H (156 aa).

Residues Leu-73, Gly-104, and 123 to 128 (IGPLTL) contribute to the S-adenosyl-L-methionine site.

Belongs to the RNA methyltransferase RlmH family. Homodimer.

The protein localises to the cytoplasm. It carries out the reaction pseudouridine(1915) in 23S rRNA + S-adenosyl-L-methionine = N(3)-methylpseudouridine(1915) in 23S rRNA + S-adenosyl-L-homocysteine + H(+). In terms of biological role, specifically methylates the pseudouridine at position 1915 (m3Psi1915) in 23S rRNA. This Xanthomonas oryzae pv. oryzae (strain MAFF 311018) protein is Ribosomal RNA large subunit methyltransferase H.